The chain runs to 600 residues: Spastin (600 aa).

The segment at Met-1 to Pro-39 is disordered. The Cytoplasmic segment spans residues Met-1–Pro-53. The segment covering Thr-15–Thr-33 has biased composition (low complexity). An intramembrane region (helical) is located at residues Leu-54 to Trp-74. Over Cys-75–Val-600 the chain is Cytoplasmic. The region spanning Tyr-110–Leu-185 is the MIT domain. The interval Gly-213–Arg-294 is disordered. The span at Lys-216–Pro-228 shows a compositional bias: basic and acidic residues. Residues Pro-253 to Thr-291 show a composition bias toward polar residues. Gly-366–Thr-373 lines the ATP pocket.

Belongs to the AAA ATPase family. Spastin subfamily. As to quaternary structure, homohexamer. The homohexamer is stabilized by ATP-binding. The homohexamer may adopt a ring conformation through which microtubules pass prior to being severed. Interacts with microtubules.

It is found in the membrane. Its subcellular location is the cytoplasm. The protein localises to the cytoskeleton. It localises to the microtubule organizing center. The protein resides in the centrosome. It is found in the perinuclear region. Its subcellular location is the nucleus. It carries out the reaction n ATP + n H2O + a microtubule = n ADP + n phosphate + (n+1) alpha/beta tubulin heterodimers.. Functionally, ATP-dependent microtubule severing protein that specifically recognizes and cuts microtubules that are polyglutamylated. Preferentially recognizes and acts on microtubules decorated with short polyglutamate tails: severing activity increases as the number of glutamates per tubulin rises from one to eight, but decreases beyond this glutamylation threshold. Microtubule severing promotes reorganization of cellular microtubule arrays and the release of microtubules from the centrosome following nucleation. Required for membrane traffic from the endoplasmic reticulum (ER) to the Golgi and for completion of the abscission stage of cytokinesis. Also plays a role in axon growth and the formation of axonal branches. This is Spastin from Xenopus laevis (African clawed frog).